We begin with the raw amino-acid sequence, 274 residues long: MPELPEVETIKRTLTPCLREQKIARVEVYHPGVIAAPDPETFSRLLAGRIITGLDRRGKYLLVHLSGEYCLVVHLRMTGRLVFTEGAAPLAPHTHVVFSLAGGPSLRFVDTRRFGRLYLAAKAEVETLPGLRDLGPEPLDPAFDALALAAILAGRRRPIKQVLLDQRLVAGIGNIYADEMLFAAGIDPRRPAASLNHEEVARLRGAMQRVLEQGIANRGTSIRDYVDGSGRQGSNQEHLQVYGRTGRPCPRCGQPLERVRLGGRSTHFCPRCQV.

Pro-2 serves as the catalytic Schiff-base intermediate with DNA. Residue Glu-3 is the Proton donor of the active site. Lys-59 functions as the Proton donor; for beta-elimination activity in the catalytic mechanism. Residues His-93, Arg-112, and Arg-155 each contribute to the DNA site. The FPG-type zinc finger occupies Gln-240 to Val-274. Arg-264 functions as the Proton donor; for delta-elimination activity in the catalytic mechanism.

It belongs to the FPG family. Monomer. The cofactor is Zn(2+).

It carries out the reaction Hydrolysis of DNA containing ring-opened 7-methylguanine residues, releasing 2,6-diamino-4-hydroxy-5-(N-methyl)formamidopyrimidine.. The catalysed reaction is 2'-deoxyribonucleotide-(2'-deoxyribose 5'-phosphate)-2'-deoxyribonucleotide-DNA = a 3'-end 2'-deoxyribonucleotide-(2,3-dehydro-2,3-deoxyribose 5'-phosphate)-DNA + a 5'-end 5'-phospho-2'-deoxyribonucleoside-DNA + H(+). Its function is as follows. Involved in base excision repair of DNA damaged by oxidation or by mutagenic agents. Acts as a DNA glycosylase that recognizes and removes damaged bases. Has a preference for oxidized purines, such as 7,8-dihydro-8-oxoguanine (8-oxoG). Has AP (apurinic/apyrimidinic) lyase activity and introduces nicks in the DNA strand. Cleaves the DNA backbone by beta-delta elimination to generate a single-strand break at the site of the removed base with both 3'- and 5'-phosphates. In Moorella thermoacetica (strain ATCC 39073 / JCM 9320), this protein is Formamidopyrimidine-DNA glycosylase.